The following is a 143-amino-acid chain: Large ribosomal subunit protein uL11 (143 aa).

The protein belongs to the universal ribosomal protein uL11 family. In terms of assembly, part of the ribosomal stalk of the 50S ribosomal subunit. Interacts with L10 and the large rRNA to form the base of the stalk. L10 forms an elongated spine to which L12 dimers bind in a sequential fashion forming a multimeric L10(L12)X complex. Post-translationally, one or more lysine residues are methylated.

Its function is as follows. Forms part of the ribosomal stalk which helps the ribosome interact with GTP-bound translation factors. The polypeptide is Large ribosomal subunit protein uL11 (Acidovorax ebreus (strain TPSY) (Diaphorobacter sp. (strain TPSY))).